Reading from the N-terminus, the 390-residue chain is Flavohemoprotein (390 aa).

Position 2 is an N-acetylserine (S2). In terms of domain architecture, Globin spans 12–149 (PLTPTEINFL…LAQTLIDAEA (138 aa)). Position 96 (H96) interacts with heme b. Active-site charge relay system residues include Y106 and E148. The reductase stretch occupies residues 157 to 390 (WEEFKDFRVT…EFFGPTDPDC (234 aa)). The region spanning 158–263 (EEFKDFRVTK…HAPVGTMKYD (106 aa)) is the FAD-binding FR-type domain. FAD is bound by residues Y196 and 214–217 (REYS). 277-282 (GIGITP) provides a ligand contact to NADP(+). 382-385 (FFGP) contacts FAD.

This sequence belongs to the globin family. Two-domain flavohemoproteins subfamily. It in the C-terminal section; belongs to the flavoprotein pyridine nucleotide cytochrome reductase family. FAD serves as cofactor. The cofactor is heme b.

The protein localises to the cytoplasm. The catalysed reaction is 2 nitric oxide + NADPH + 2 O2 = 2 nitrate + NADP(+) + H(+). It carries out the reaction 2 nitric oxide + NADH + 2 O2 = 2 nitrate + NAD(+) + H(+). Functionally, is involved in NO detoxification in an aerobic process, termed nitric oxide dioxygenase (NOD) reaction that utilizes O(2) and NAD(P)H to convert NO to nitrate, which protects the fungus from various noxious nitrogen compounds. Therefore, plays a central role in the inducible response to nitrosative stress. In terms of biological role, in the presence of oxygen and NADH, it has NADH oxidase activity, which leads to the generation of superoxide and H(2)O(2). Under anaerobic conditions, it also exhibits nitric oxide reductase and FAD reductase activities. However, all these reactions are much lower than NOD activity. In Candida norvegensis (Yeast), this protein is Flavohemoprotein.